The following is a 393-amino-acid chain: Cytochrome b (393 aa).

Helical transmembrane passes span 32-52 (FGSL…TLAM), 76-98 (WLIR…LHMG), 113-133 (VWTL…LGYV), and 179-199 (FFAL…MHLI). The heme b site is built by histidine 82 and histidine 96. Residues histidine 183 and histidine 197 each contribute to the heme b site. Histidine 202 serves as a coordination point for a ubiquinone. Transmembrane regions (helical) follow at residues 226 to 246 (FIFK…IFVF), 290 to 310 (LLGV…PFTD), 322 to 342 (LSKI…KLGA), and 349 to 369 (FIEF…IIVP).

The protein belongs to the cytochrome b family. As to quaternary structure, fungal cytochrome b-c1 complex contains 10 subunits; 3 respiratory subunits, 2 core proteins and 5 low-molecular weight proteins. Cytochrome b-c1 complex is a homodimer. It depends on heme b as a cofactor.

It is found in the mitochondrion inner membrane. In terms of biological role, component of the ubiquinol-cytochrome c reductase complex (complex III or cytochrome b-c1 complex) that is part of the mitochondrial respiratory chain. The b-c1 complex mediates electron transfer from ubiquinol to cytochrome c. Contributes to the generation of a proton gradient across the mitochondrial membrane that is then used for ATP synthesis. The polypeptide is Cytochrome b (COB) (Venturia inaequalis (Apple scab fungus)).